A 170-amino-acid polypeptide reads, in one-letter code: MAFIGVAILINGGKNNEGIDNISLFGCLLVLSAGIIFAAVLRWTQRVVAKVSTQAYTSVSIVLGTITTLPFTLLLTENWQISLNSTGIAGLLYLAIGCSWLAYWLWNKGLNSVDANISGVLVALEPLFGILFAVSLLGETLSFSAALGITIIMLATLGSTLLPKLLKKSV.

5 helical membrane passes run 21-41 (NISL…AAVL), 55-75 (AYTS…TLLL), 86-106 (TGIA…YWLW), 117-137 (ISGV…VSLL), and 143-163 (FSAA…TLLP). Positions 35-161 (IIFAAVLRWT…IMLATLGSTL (127 aa)) constitute an EamA domain.

It belongs to the EamA transporter family.

It is found in the cell membrane. This is an uncharacterized protein from Haemophilus influenzae (strain ATCC 51907 / DSM 11121 / KW20 / Rd).